Reading from the N-terminus, the 812-residue chain is ATP-dependent DNA helicase PIF3 (812 aa).

ATP is bound at residue 247–254 (GSAGTGKT). Residues 741 to 761 (HLVYVACSRVRSMDQLIVRNV) mediate DNA binding.

This sequence belongs to the helicase family. PIF1 subfamily. As to quaternary structure, monomer. Requires Mg(2+) as cofactor.

The protein resides in the cytoplasm. The catalysed reaction is Couples ATP hydrolysis with the unwinding of duplex DNA at the replication fork by translocating in the 5'-3' direction. This creates two antiparallel DNA single strands (ssDNA). The leading ssDNA polymer is the template for DNA polymerase III holoenzyme which synthesizes a continuous strand.. It carries out the reaction ATP + H2O = ADP + phosphate + H(+). Its function is as follows. DNA-dependent ATPase and 5'-3' DNA helicase required for the maintenance of genome stability. The polypeptide is ATP-dependent DNA helicase PIF3 (Trypanosoma brucei brucei (strain 927/4 GUTat10.1)).